Reading from the N-terminus, the 521-residue chain is U4/U6 small nuclear ribonucleoprotein Prp4 (521 aa).

Position 26 is an N6-acetyllysine (lysine 26). 7 WD repeats span residues glycine 228–threonine 267, glycine 270–aspartate 317, glycine 320–histidine 359, glycine 362–phenylalanine 401, glycine 404–threonine 443, alanine 446–threonine 486, and glycine 489–glutamate 521.

Component of the precatalytic spliceosome (spliceosome B complex). Component of the U4/U6-U5 tri-snRNP complex, a building block of the precatalytic spliceosome (spliceosome B complex). The U4/U6-U5 tri-snRNP complex is composed of the U4, U6 and U5 snRNAs and at least PRPF3, PRPF4, PRPF6, PRPF8, PRPF31, SNRNP200, TXNL4A, SNRNP40, SNRPB, SNRPD1, SNRPD2, SNRPD3, SNRPE, SNRPF, SNRPG, DDX23, CD2BP2, PPIH, SNU13, EFTUD2, SART1 and USP39, plus LSM2, LSM3, LSM4, LSM5, LSM6, LSM7 and LSM8. Interacts directly with PRPF18, PPIH and PRPF3. Part of a heteromeric complex containing PPIH, PRPF3 and PRPF4 that is stable in the absence of RNA. Interacts with ERCC6.

It is found in the nucleus. Its subcellular location is the nucleus speckle. In terms of biological role, plays a role in pre-mRNA splicing as component of the U4/U6-U5 tri-snRNP complex that is involved in spliceosome assembly, and as component of the precatalytic spliceosome (spliceosome B complex). The protein is U4/U6 small nuclear ribonucleoprotein Prp4 (PRPF4) of Pongo abelii (Sumatran orangutan).